The sequence spans 907 residues: Protein translocase subunit SecA (907 aa).

ATP is bound by residues Q87, 105 to 109 (GEGKT), and D512. Zn(2+)-binding residues include C891, C893, C902, and H903.

The protein belongs to the SecA family. In terms of assembly, monomer and homodimer. Part of the essential Sec protein translocation apparatus which comprises SecA, SecYEG and auxiliary proteins SecDF-YajC and YidC. It depends on Zn(2+) as a cofactor.

It localises to the cell inner membrane. The protein resides in the cytoplasm. It catalyses the reaction ATP + H2O + cellular proteinSide 1 = ADP + phosphate + cellular proteinSide 2.. In terms of biological role, part of the Sec protein translocase complex. Interacts with the SecYEG preprotein conducting channel. Has a central role in coupling the hydrolysis of ATP to the transfer of proteins into and across the cell membrane, serving both as a receptor for the preprotein-SecB complex and as an ATP-driven molecular motor driving the stepwise translocation of polypeptide chains across the membrane. The chain is Protein translocase subunit SecA from Shewanella loihica (strain ATCC BAA-1088 / PV-4).